The primary structure comprises 258 residues: Regulatory protein RecX (258 aa).

Belongs to the RecX family.

Its subcellular location is the cytoplasm. Modulates RecA activity. The protein is Regulatory protein RecX of Streptococcus mutans serotype c (strain ATCC 700610 / UA159).